The sequence spans 126 residues: Acidic phospholipase A2 2 (126 aa).

The propeptide occupies 1–7 (SNRPMPL). Cystine bridges form between Cys18–Cys78, Cys33–Cys125, Cys35–Cys51, Cys50–Cys106, Cys57–Cys99, Cys67–Cys92, and Cys85–Cys97. Ca(2+) is bound by residues Tyr34, Gly36, and Gly38. His54 is an active-site residue. Ca(2+) is bound at residue Asp55. Residue Asp100 is part of the active site.

The protein belongs to the phospholipase A2 family. Group I subfamily. D49 sub-subfamily. In terms of assembly, heterodimer formed between two homologous isoforms: isoform 1 and isoform 2. The cofactor is Ca(2+). In terms of tissue distribution, expressed by the venom gland.

The protein localises to the secreted. It carries out the reaction a 1,2-diacyl-sn-glycero-3-phosphocholine + H2O = a 1-acyl-sn-glycero-3-phosphocholine + a fatty acid + H(+). Functionally, PLA2 catalyzes the calcium-dependent hydrolysis of the 2-acyl groups in 3-sn-phosphoglycerides. The protein is Acidic phospholipase A2 2 of Naja sagittifera (Andaman cobra).